A 321-amino-acid polypeptide reads, in one-letter code: Aspartate carbamoyltransferase catalytic subunit (321 aa).

Carbamoyl phosphate-binding residues include R64 and T65. K92 is an L-aspartate binding site. Carbamoyl phosphate-binding residues include R114, H144, and Q147. L-aspartate contacts are provided by R177 and R232. Positions 273 and 274 each coordinate carbamoyl phosphate.

This sequence belongs to the aspartate/ornithine carbamoyltransferase superfamily. ATCase family. Heterododecamer (2C3:3R2) of six catalytic PyrB chains organized as two trimers (C3), and six regulatory PyrI chains organized as three dimers (R2).

It catalyses the reaction carbamoyl phosphate + L-aspartate = N-carbamoyl-L-aspartate + phosphate + H(+). The protein operates within pyrimidine metabolism; UMP biosynthesis via de novo pathway; (S)-dihydroorotate from bicarbonate: step 2/3. In terms of biological role, catalyzes the condensation of carbamoyl phosphate and aspartate to form carbamoyl aspartate and inorganic phosphate, the committed step in the de novo pyrimidine nucleotide biosynthesis pathway. The protein is Aspartate carbamoyltransferase catalytic subunit of Alkalilimnicola ehrlichii (strain ATCC BAA-1101 / DSM 17681 / MLHE-1).